The primary structure comprises 254 residues: Mediator of RNA polymerase II transcription subunit 4 (254 aa).

Positions 72–114 form a coiled coil; the sequence is RVHQEMQSLEKEVEKRDSDIQQLQKQLKEAEHILATAVYQAKE. Positions 215–254 are disordered; it reads ILPPHHGNDFGLEPPGHNKENEDDVEAMSTDSSSSSSDSD. Over residues 243 to 254 the composition is skewed to low complexity; that stretch reads STDSSSSSSDSD.

Belongs to the Mediator complex subunit 4 family. As to quaternary structure, component of the Mediator complex.

It is found in the nucleus. Component of the Mediator complex, a coactivator involved in the regulated transcription of nearly all RNA polymerase II-dependent genes. Mediator functions as a bridge to convey information from gene-specific regulatory proteins to the basal RNA polymerase II transcription machinery. Mediator is recruited to promoters by direct interactions with regulatory proteins and serves as a scaffold for the assembly of a functional preinitiation complex with RNA polymerase II and the general transcription factors. The sequence is that of Mediator of RNA polymerase II transcription subunit 4 (med4) from Danio rerio (Zebrafish).